Reading from the N-terminus, the 393-residue chain is Acetate kinase (393 aa).

Residue Asn8 participates in Mg(2+) binding. An ATP-binding site is contributed by Lys15. Substrate is bound at residue Arg91. The active-site Proton donor/acceptor is Asp148. ATP-binding positions include 206 to 210 (HLGSG), 280 to 282 (DMR), and 325 to 329 (GVGEN). Residue Glu376 participates in Mg(2+) binding.

This sequence belongs to the acetokinase family. As to quaternary structure, homodimer. Requires Mg(2+) as cofactor. It depends on Mn(2+) as a cofactor.

The protein resides in the cytoplasm. The enzyme catalyses acetate + ATP = acetyl phosphate + ADP. It functions in the pathway metabolic intermediate biosynthesis; acetyl-CoA biosynthesis; acetyl-CoA from acetate: step 1/2. Catalyzes the formation of acetyl phosphate from acetate and ATP. Can also catalyze the reverse reaction. This is Acetate kinase from Rhizobium meliloti (Ensifer meliloti).